A 197-amino-acid chain; its full sequence is dTTP/UTP pyrophosphatase (197 aa).

Residue aspartate 70 is the Proton acceptor of the active site.

This sequence belongs to the Maf family. YhdE subfamily. Requires a divalent metal cation as cofactor.

It localises to the cytoplasm. It carries out the reaction dTTP + H2O = dTMP + diphosphate + H(+). The enzyme catalyses UTP + H2O = UMP + diphosphate + H(+). Its function is as follows. Nucleoside triphosphate pyrophosphatase that hydrolyzes dTTP and UTP. May have a dual role in cell division arrest and in preventing the incorporation of modified nucleotides into cellular nucleic acids. The polypeptide is dTTP/UTP pyrophosphatase (yceF2) (Shigella sonnei (strain Ss046)).